The primary structure comprises 462 residues: Transactivator/viroplasmin protein (462 aa).

A disordered region spans residues 433-462 (NVSNDEKRSTKSVSSDEINLSAENDGYQHS). Positions 443-462 (KSVSSDEINLSAENDGYQHS) are enriched in polar residues.

The protein belongs to the caulimoviridae viroplasmin family.

It localises to the host cytoplasm. In terms of biological role, enhances the translation of downstream ORFs on polycistronic mRNAs derived from soybean chlorotic mottle virus. The polypeptide is Transactivator/viroplasmin protein (Soybean chlorotic mottle virus).